Here is a 242-residue protein sequence, read N- to C-terminus: Biosynthetic peptidoglycan transglycosylase (242 aa).

The helical transmembrane segment at 19–39 threads the bilayer; the sequence is ILVVLAVFWGGGIALFSVVPV.

It belongs to the glycosyltransferase 51 family.

It is found in the cell inner membrane. The catalysed reaction is [GlcNAc-(1-&gt;4)-Mur2Ac(oyl-L-Ala-gamma-D-Glu-L-Lys-D-Ala-D-Ala)](n)-di-trans,octa-cis-undecaprenyl diphosphate + beta-D-GlcNAc-(1-&gt;4)-Mur2Ac(oyl-L-Ala-gamma-D-Glu-L-Lys-D-Ala-D-Ala)-di-trans,octa-cis-undecaprenyl diphosphate = [GlcNAc-(1-&gt;4)-Mur2Ac(oyl-L-Ala-gamma-D-Glu-L-Lys-D-Ala-D-Ala)](n+1)-di-trans,octa-cis-undecaprenyl diphosphate + di-trans,octa-cis-undecaprenyl diphosphate + H(+). It functions in the pathway cell wall biogenesis; peptidoglycan biosynthesis. Its function is as follows. Peptidoglycan polymerase that catalyzes glycan chain elongation from lipid-linked precursors. This chain is Biosynthetic peptidoglycan transglycosylase, found in Citrobacter koseri (strain ATCC BAA-895 / CDC 4225-83 / SGSC4696).